The sequence spans 117 residues: Immunoglobulin lambda variable 1-44 (117 aa).

Residues 1 to 19 (MASFPLLLTLLTHCAGSWA) form the signal peptide. Pyrrolidone carboxylic acid is present on glutamine 20. Residues 20-44 (QSVLTQPPSASGTPGQRVTISCSGS) form a framework-1 region. Positions 20 to 117 (QSVLTQPPSA…CAAWDDSLNG (98 aa)) constitute an Ig-like domain. Over residues 24-35 (TQPPSASGTPGQ) the composition is skewed to polar residues. Positions 24-45 (TQPPSASGTPGQRVTISCSGSS) are disordered. An intrachain disulfide couples cysteine 41 to cysteine 108. Positions 45–52 (SSNIGSNT) are complementarity-determining-1. The segment at 53 to 69 (VNWYQQLPGTAPKLLIY) is framework-2. The tract at residues 70–72 (SNN) is complementarity-determining-2. The segment at 73–108 (QRPSGVPDRFSGSKSGTSASLAISGLQSEDEADYYC) is framework-3. The tract at residues 109 to 117 (AAWDDSLNG) is complementarity-determining-3.

Immunoglobulins are composed of two identical heavy chains and two identical light chains; disulfide-linked.

It is found in the secreted. Its subcellular location is the cell membrane. In terms of biological role, v region of the variable domain of immunoglobulin light chains that participates in the antigen recognition. Immunoglobulins, also known as antibodies, are membrane-bound or secreted glycoproteins produced by B lymphocytes. In the recognition phase of humoral immunity, the membrane-bound immunoglobulins serve as receptors which, upon binding of a specific antigen, trigger the clonal expansion and differentiation of B lymphocytes into immunoglobulins-secreting plasma cells. Secreted immunoglobulins mediate the effector phase of humoral immunity, which results in the elimination of bound antigens. The antigen binding site is formed by the variable domain of one heavy chain, together with that of its associated light chain. Thus, each immunoglobulin has two antigen binding sites with remarkable affinity for a particular antigen. The variable domains are assembled by a process called V-(D)-J rearrangement and can then be subjected to somatic hypermutations which, after exposure to antigen and selection, allow affinity maturation for a particular antigen. The chain is Immunoglobulin lambda variable 1-44 from Homo sapiens (Human).